The chain runs to 183 residues: Probable chemoreceptor glutamine deamidase CheD (183 aa).

This sequence belongs to the CheD family.

The enzyme catalyses L-glutaminyl-[protein] + H2O = L-glutamyl-[protein] + NH4(+). Functionally, probably deamidates glutamine residues to glutamate on methyl-accepting chemotaxis receptors (MCPs), playing an important role in chemotaxis. The chain is Probable chemoreceptor glutamine deamidase CheD from Zymomonas mobilis subsp. mobilis (strain ATCC 31821 / ZM4 / CP4).